The sequence spans 146 residues: Putative pre-16S rRNA nuclease (146 aa).

This sequence belongs to the YqgF nuclease family.

It is found in the cytoplasm. In terms of biological role, could be a nuclease involved in processing of the 5'-end of pre-16S rRNA. This is Putative pre-16S rRNA nuclease from Paraburkholderia xenovorans (strain LB400).